Reading from the N-terminus, the 255-residue chain is Lactose phosphotransferase system repressor (255 aa).

The 56-residue stretch at 3 to 58 (KKRRLEKILDMLKIDGTITIKEIIDELDISDMTARRDLDALEADGLLTRTHGGAQL) folds into the HTH deoR-type domain. Positions 20 to 39 (ITIKEIIDELDISDMTARRD) form a DNA-binding region, H-T-H motif.

In terms of biological role, repressor of the lactose catabolism operon. Galactose-6-phosphate is the inducer. The polypeptide is Lactose phosphotransferase system repressor (lacR) (Lactococcus lactis subsp. lactis (Streptococcus lactis)).